The chain runs to 184 residues: Large ribosomal subunit protein uL6 (184 aa).

It belongs to the universal ribosomal protein uL6 family. In terms of assembly, part of the 50S ribosomal subunit.

This protein binds to the 23S rRNA, and is important in its secondary structure. It is located near the subunit interface in the base of the L7/L12 stalk, and near the tRNA binding site of the peptidyltransferase center. The chain is Large ribosomal subunit protein uL6 from Methanosphaera stadtmanae (strain ATCC 43021 / DSM 3091 / JCM 11832 / MCB-3).